The primary structure comprises 383 residues: Microtubule-associated protein tau (383 aa).

Over residues 1–27 (MAEPRQEFDVMEDHAGTYGLGDRKDQE) the composition is skewed to basic and acidic residues. Residues 1-198 (MAEPRQEFDV…PVPMPDLKNV (198 aa)) form a disordered region. Ala2 is subject to N-acetylalanine. Residues Tyr18 and Tyr29 each carry the phosphotyrosine modification. Lys44 is covalently cross-linked (Glycyl lysine isopeptide (Lys-Gly) (interchain with G-Cter in ubiquitin)). A Phosphothreonine modification is found at Thr53. Positions 72–91 (KSKDGTGSDDKKAKGADGKT) are enriched in basic and acidic residues. Thr95 bears the Phosphothreonine mark. The residue at position 97 (Arg97) is an Omega-N-methylarginine. Lys105 is subject to N6,N6-dimethyllysine; alternate. Lys105 carries the post-translational modification N6-acetyllysine; alternate. Residues Thr111, Thr117, and Thr123 each carry the phosphothreonine modification. Pro residues predominate over residues 116–128 (KTPPAPKTPPSSG). Phosphoserine occurs at positions 127, 133, and 137. Residues 129 to 156 (EPPKSGDRSGYSSPGSPGTPGSRSRTPS) show a composition bias toward low complexity. Tyr139 is subject to Phosphotyrosine. Ser140, Ser141, and Ser144 each carry phosphoserine. Phosphothreonine occurs at positions 147 and 154. Ser156 bears the Phosphoserine mark. Thr159 carries the post-translational modification Phosphothreonine. N6-acetyllysine is present on Lys167. Residue Thr173 is modified to Phosphothreonine. A phosphoserine mark is found at Ser177 and Ser179. Tau/MAP repeat units follow at residues 186–216 (QTAP…GGGK), 217–247 (VQII…GGGS), 248–278 (VQIV…GGGQ), and 279–310 (VEVK…GGGN). Lys196 is covalently cross-linked (Glycyl lysine isopeptide (Lys-Gly) (interchain with G-Cter in ubiquitin)). Lys201 is subject to N6-acetyllysine; alternate. Lys201 carries the N6-methyllysine; alternate modification. Residue Lys201 forms a Glycyl lysine isopeptide (Lys-Gly) (interchain with G-Cter in ubiquitin); alternate linkage. Ser204 bears the Phosphoserine mark. Lys209 is covalently cross-linked (Glycyl lysine isopeptide (Lys-Gly) (interchain with G-Cter in ubiquitin)). Lys223 carries the post-translational modification N6-acetyllysine; alternate. A Glycyl lysine isopeptide (Lys-Gly) (interchain with G-Cter in ubiquitin); alternate cross-link involves residue Lys223. Phosphoserine is present on residues Ser227 and Ser231. N6-acetyllysine is present on Lys232. A disulfide bond links Cys233 and Cys264. The residue at position 235 (Ser235) is a Phosphoserine. Residue Lys240 is modified to N6-acetyllysine; alternate. Lys240 participates in a covalent cross-link: Glycyl lysine isopeptide (Lys-Gly) (interchain with G-Cter in ubiquitin); alternate. Ser247 bears the Phosphoserine mark. Lys253 is subject to N6,N6-dimethyllysine; alternate. N6-acetyllysine; alternate is present on residues Lys253, Lys259, and Lys263. Glycyl lysine isopeptide (Lys-Gly) (interchain with G-Cter in ubiquitin); alternate cross-links involve residues Lys253, Lys259, and Lys263. At Ser266 the chain carries Phosphoserine. Lys273, Lys285, and Lys289 each carry N6-acetyllysine; alternate. Residues Lys273, Lys285, and Lys289 each participate in a glycyl lysine isopeptide (Lys-Gly) (interchain with G-Cter in ubiquitin); alternate cross-link. Arg291 carries the post-translational modification Omega-N-methylarginine. Position 294 is a phosphoserine (Ser294). Lys295 is covalently cross-linked (Glycyl lysine isopeptide (Lys-Gly) (interchain with G-Cter in ubiquitin)). Ser298 is subject to Phosphoserine. Lys311 is modified (N6-acetyllysine; alternate). Residue Lys311 forms a Glycyl lysine isopeptide (Lys-Gly) (interchain with G-Cter in ubiquitin); alternate linkage. Lys317 is covalently cross-linked (Glycyl lysine isopeptide (Lys-Gly) (interchain with G-Cter in ubiquitin)). N6-acetyllysine; alternate is present on Lys327. Lys327 is covalently cross-linked (Glycyl lysine isopeptide (Lys-Gly) (interchain with G-Cter in ubiquitin); alternate). Tyr336 carries the post-translational modification Phosphotyrosine. Phosphoserine occurs at positions 338 and 342. The disordered stretch occupies residues 340-359 (VVSGDTSPRHLSNVSSTGSI). Positions 343-358 (GDTSPRHLSNVSSTGS) are enriched in polar residues. Position 345 is a phosphothreonine (Thr345). Phosphoserine is present on residues Ser346, Ser351, Ser358, and Ser364. The residue at position 369 (Thr369) is a Phosphothreonine.

As to quaternary structure, interacts with MARK1, MARK2, MARK3 and MARK4. Interacts with SQSTM1 when polyubiquitinated. Interacts with PSMC2 through SQSTM1. Interacts with FKBP4. Binds to CSNK1D. Interacts with SGK1. Interacts with PIN1. Interacts with LRRK2. Interacts with LRP1, leading to endocytosis; this interaction is reduced in the presence of LRPAP1/RAP. Post-translationally, polyubiquitinated. Requires functional TRAF6 and may provoke SQSTM1-dependent degradation by the proteasome. Phosphorylation at various serine and threonine residues in S-P or T-P motifs by proline-directed protein kinases (PDPK1, CDK1, CDK5, GSK3, MAPK) (a few sites per protein in interphase, more in mitosis), and at serine residues in K-X-G-S motifs by MAP/microtubule affinity-regulating kinase (MARK1, MARK2, MARK3 or MARK4), causing detachment from microtubules, and their disassembly. Phosphorylation at Ser-204 by BRSK1 and BRSK2 in neurons affects ability to bind microtubules and plays a role in neuron polarization. Phosphorylated by PHK. Dephosphorylation at several serine and threonine residues by the serine/threonine phosphatase PPP5C. In terms of tissue distribution, expressed in neurons.

The protein localises to the cytoplasm. The protein resides in the cytosol. It localises to the cell membrane. Its subcellular location is the cytoskeleton. It is found in the cell projection. The protein localises to the axon. The protein resides in the dendrite. Its function is as follows. Promotes microtubule assembly and stability, and might be involved in the establishment and maintenance of neuronal polarity. The C-terminus binds axonal microtubules while the N-terminus binds neural plasma membrane components, suggesting that tau functions as a linker protein between both. Axonal polarity is predetermined by tau localization (in the neuronal cell) in the domain of the cell body defined by the centrosome. The chain is Microtubule-associated protein tau (MAPT) from Papio hamadryas (Hamadryas baboon).